The primary structure comprises 146 residues: Hemoglobin subunit beta-A/B (146 aa).

Gly-1 is modified (N-acetylserine; in variant beta-B). The region spanning 2-146 (FLTAEEKGLV…VANALAHKYH (145 aa)) is the Globin domain. A Phosphoserine modification is found at Ser-44. Lys-59 bears the N6-acetyllysine mark. His-63 serves as a coordination point for heme b. Lys-82 is subject to N6-acetyllysine. A heme b-binding site is contributed by His-92. Cys-93 carries the S-nitrosocysteine modification. Lys-144 is subject to N6-acetyllysine.

Belongs to the globin family. Heterotetramer of two alpha chains and two beta chains. In terms of tissue distribution, red blood cells.

In terms of biological role, involved in oxygen transport from the lung to the various peripheral tissues. This chain is Hemoglobin subunit beta-A/B (HBB), found in Felis catus (Cat).